A 599-amino-acid polypeptide reads, in one-letter code: NTPase KAP family P-loop domain-containing protein 1 (599 aa).

The KAP NTPase domain maps to 1–416; it reads MQQEAAQRES…NTVPITVRLL (416 aa). A run of 3 helical transmembrane segments spans residues 25–45, 119–139, and 156–176; these read GWGV…ITEL, VCLA…LLYL, and ALGG…VYSV. Residues 543–599 are disordered; the sequence is ALKPPSPPKSPSQDGPQASPRAIIAAGTSHAGQGSGHSKEAHQTRDRTHGGKPRPMA. Residues 579–591 are compositionally biased toward basic and acidic residues; it reads HSKEAHQTRDRTH.

The protein resides in the membrane. This is NTPase KAP family P-loop domain-containing protein 1 (Nkpd1) from Mus musculus (Mouse).